A 629-amino-acid polypeptide reads, in one-letter code: tRNA uridine 5-carboxymethylaminomethyl modification enzyme MnmG (629 aa).

13–18 (GGGHAG) contributes to the FAD binding site. 273–287 (GPRYCPSIEDKINRF) contacts NAD(+).

The protein belongs to the MnmG family. As to quaternary structure, homodimer. Heterotetramer of two MnmE and two MnmG subunits. The cofactor is FAD.

It is found in the cytoplasm. Functionally, NAD-binding protein involved in the addition of a carboxymethylaminomethyl (cmnm) group at the wobble position (U34) of certain tRNAs, forming tRNA-cmnm(5)s(2)U34. This chain is tRNA uridine 5-carboxymethylaminomethyl modification enzyme MnmG, found in Shewanella piezotolerans (strain WP3 / JCM 13877).